Reading from the N-terminus, the 90-residue chain is Conotoxin Im6.2 (90 aa).

The N-terminal stretch at 1–18 is a signal peptide; sequence MKLTILLLVAALLVLTQA. A propeptide spanning residues 19–29 is cleaved from the precursor; the sequence is RTERRRVKSRK. 3 disulfide bridges follow: cysteine 61/cysteine 75, cysteine 68/cysteine 79, and cysteine 74/cysteine 84. Glutamic acid 1-amide is present on glutamate 89.

It belongs to the conotoxin O2 superfamily. Expressed by the venom duct.

The protein localises to the secreted. Functionally, probable neurotoxin. In Conus imperialis (Imperial cone), this protein is Conotoxin Im6.2.